The primary structure comprises 1030 residues: Teashirt homolog 2 (1030 aa).

The segment at 1–120 (MPRRKQQAPK…THPKLPSEPH (120 aa)) is disordered. Residues 11-42 (RAAGYAQEEVLKEEEEIKEEEEEEEDSGSVAQ) are a coiled coil. The span at 21-37 (LKEEEEIKEEEEEEEDS) shows a compositional bias: acidic residues. 2 stretches are compositionally biased toward polar residues: residues 39–49 (SVAQHQSSNDT) and 66–95 (SCQN…QVSD). Residues 103-120 (DVSDKKANTHPKLPSEPH) show a composition bias toward basic and acidic residues. K189 is covalently cross-linked (Glycyl lysine isopeptide (Lys-Gly) (interchain with G-Cter in SUMO2)). 2 consecutive C2H2-type zinc fingers follow at residues 216 to 240 (FRCR…ETGH) and 276 to 300 (LKCM…KTKH). Positions 240–266 (HYQDDNRKKDKLRPTSYSKPRKRAFQD) are disordered. Residues K307 and K316 each participate in a glycyl lysine isopeptide (Lys-Gly) (interchain with G-Cter in SUMO2) cross-link. Residues 328 to 348 (VNRPCSPDSTTGSLADSFSSQ) form a disordered region. Polar residues predominate over residues 334-348 (PDSTTGSLADSFSSQ). The C2H2-type 3; atypical zinc finger occupies 381 to 405 (LKCMECGSSHDTLQQLTTHMMVTGH). A Glycyl lysine isopeptide (Lys-Gly) (interchain with G-Cter in SUMO2) cross-link involves residue K418. The span at 432–459 (SLSETPNSESLAPKPSSNSPSECTASTT) shows a compositional bias: polar residues. Residues 432 to 488 (SLSETPNSESLAPKPSSNSPSECTASTTELKKESKKEKGEGIEDEQGVKSEDYEDSL) are disordered. The span at 460-482 (ELKKESKKEKGEGIEDEQGVKSE) shows a compositional bias: basic and acidic residues. Residues K462, K480, K497, and K601 each participate in a glycyl lysine isopeptide (Lys-Gly) (interchain with G-Cter in SUMO2) cross-link. 2 stretches are compositionally biased toward basic and acidic residues: residues 608–623 (DEVV…HEEA) and 633–664 (SFSK…KPEP). Disordered regions lie at residues 608 to 687 (DEVV…LPSI), 703 to 726 (KATE…VFHK), and 759 to 784 (QPID…SPPQ). A Glycyl lysine isopeptide (Lys-Gly) (interchain with G-Cter in SUMO2) cross-link involves residue K652. The span at 710 to 722 (SPSCSSPNSSTSP) shows a compositional bias: low complexity. Positions 773-783 (SSQAQSCTSPP) are enriched in polar residues. Glycyl lysine isopeptide (Lys-Gly) (interchain with G-Cter in SUMO2) cross-links involve residues K796 and K816. The segment at residues 837–907 (RKGRQSNWNP…NVKYQLRKTG (71 aa)) is a DNA-binding region (homeobox). The C2H2-type 4 zinc-finger motif lies at 922 to 944 (FYCSDCASQFRTPSTYISHLESH). A Glycyl lysine isopeptide (Lys-Gly) (interchain with G-Cter in SUMO2) cross-link involves residue K962. Disordered regions lie at residues 965 to 987 (QEIS…EDTD) and 1009 to 1030 (LSKT…VDEE). A compositionally biased stretch (polar residues) spans 968–977 (SRVSSAQRSP). Phosphoserine is present on S976. The C2H2-type 5 zinc finger occupies 990–1013 (FKCKLCRRTFVSKHAVKLHLSKTH).

The protein belongs to the teashirt C2H2-type zinc-finger protein family. Interacts (via homeobox domain) with APBB1 (via PID domain 1). Post-translationally, sumoylated.

Its subcellular location is the nucleus. Probable transcriptional regulator involved in developmental processes. May act as a transcriptional repressor (Potential). The polypeptide is Teashirt homolog 2 (Tshz2) (Mus musculus (Mouse)).